A 372-amino-acid polypeptide reads, in one-letter code: Putative glutamate--cysteine ligase 2 (372 aa).

The protein belongs to the glutamate--cysteine ligase type 2 family. YbdK subfamily.

It catalyses the reaction L-cysteine + L-glutamate + ATP = gamma-L-glutamyl-L-cysteine + ADP + phosphate + H(+). ATP-dependent carboxylate-amine ligase which exhibits weak glutamate--cysteine ligase activity. In Cupriavidus metallidurans (strain ATCC 43123 / DSM 2839 / NBRC 102507 / CH34) (Ralstonia metallidurans), this protein is Putative glutamate--cysteine ligase 2.